The primary structure comprises 37 residues: Photosystem I reaction center subunit VIII (37 aa).

The helical transmembrane segment at 7-27 threads the bilayer; sequence LPAIFVPLVGLVFPAIAMVSL.

It belongs to the PsaI family.

Its subcellular location is the plastid. It localises to the chloroplast thylakoid membrane. May help in the organization of the PsaL subunit. This is Photosystem I reaction center subunit VIII from Morus indica (Mulberry).